The following is a 378-amino-acid chain: Stimulator of interferon genes protein (378 aa).

Over 1–17 (MPHSSLHPSIPQPRGLR) the chain is Cytoplasmic. A mediates interaction with ZDHHC1 and ZDHHC11 region spans residues 1 to 190 (MPHSSLHPSI…IYNQFHNNTL (190 aa)). The chain crosses the membrane as a helical span at residues 18–34 (AQKAALVLLSACLVALW). Residues 35-44 (GLGEPPDYTL) are Lumenal-facing. Residues 45–69 (KWLVLHLASQQMGLLIKGICSLAEE) form a helical membrane-spanning segment. The Cytoplasmic segment spans residues 70–91 (LCHVHSRYHGSYWRAVRACLCS). C88 carries the S-palmitoyl cysteine lipid modification. The helical transmembrane segment at 92–106 (SMRCGALLLLSCYFY) threads the bilayer. Topologically, residues 107 to 116 (CSLPNMADLP) are lumenal. Residues 117–134 (FTWMLALLGLSQALNILL) traverse the membrane as a helical segment. The Cytoplasmic segment spans residues 135–378 (GLQGLAPAEV…KPLPLRSDVF (244 aa)). K150 participates in a covalent cross-link: Glycyl lysine isopeptide (Lys-Gly) (interchain with G-Cter in ubiquitin). Residues 153–339 (FNVAHGLAWS…LQHLRQEERE (187 aa)) form a cyclic dinucleotide-binding domain (CBD) region. Positions 162 and 167 each coordinate 2',3'-cGAMP. Residues S162 and Y167 each coordinate 3',3'-c-di-GMP. 2',3'-cUAMP is bound at residue Y167. K236 participates in a covalent cross-link: Glycyl lysine isopeptide (Lys-Gly) (interchain with G-Cter in ubiquitin). Residues R238 and T263 each coordinate 2',3'-cGAMP. 2',3'-cUAMP-binding residues include R238 and T263. 3',3'-c-di-GMP contacts are provided by residues 238-241 (RVYT) and T263. Residues 339-378 (EVTMGSTETSVMPGSSVLSQEPELLISGLEKPLPLRSDVF) are C-terminal tail (CTT). Position 354 is a phosphoserine (S354). Residues S357 and S365 each carry the phosphoserine; by TBK1 modification. Positions 362–365 (LLIS) match the pLxIS motif motif.

It belongs to the STING family. In terms of assembly, homodimer; forms a homodimer in absence of cyclic nucleotide (c-di-GMP or cGAMP); 'Lys-63'-linked ubiquitination at Lys-150 is required for homodimerization. Homotetramer; in presence of cyclic nucleotide (c-di-GMP or cGAMP), forms tetramers and higher-order oligomers through side-by-side packing. Interacts (when phosphorylated) with IRF3; following activation and phosphorylation on the pLxIS motif by TBK1, recruits IRF3. Interacts with RIGI, MAVS and SSR2. Interacts with RNF5 and TRIM56. Interacts with TBK1; when homodimer, leading to subsequent production of IFN-beta. Interacts with IFIT1 and IFIT2. Interacts with TRIM29; this interaction induces STING1 ubiquitination and subsequent degradation. Associates with the MHC-II complex. Interacts with STEEP1; interaction takes place upon cGAMP-activation and STING1 phosphorylation by MAP3K7/TAK1 and promotes STING1 translocation to COPII vesicles. Interacts with SEC24A, SEC24B and SEC24C; promoting translocation to COPII vesicles. Interacts (when ubiquitinated) with SQSTM1; leading to relocalization to autophagosomes. Interacts with SURF4. Interacts with HNRNPA2B1. Interacts with ZDHHC1; ZDHHC1 constitutively interacts with STING1 and in presence of DNA viruses activates it by promoting its cGAMP-induced oligomerization and the recruitment of downstream signaling components. Interacts with ZDHHC11; in presence of DNA viruses promotes the recruitment of IRF3 to STING1. Interacts with TOMM70. Interacts with TAB1; promoting recruitment of TAB1 to the endoplasmic reticulum membrane and subsequent activation of MAP3K7/TAK1. Interacts (via transmembrane domain) with TMEM203. Interacts with DDX41. Phosphorylation by TBK1 leads to activation and production of IFN-beta. Following cyclic nucleotide (c-di-GMP or cGAMP)-binding, activation and translocation from the endoplasmic reticulum, STING1 is phosphorylated by TBK1 at Ser-365 in the pLxIS motif. The phosphorylated pLxIS motif constitutes an IRF3-binding motif, leading to recruitment of the transcription factor IRF3 to induce type-I interferons and other cytokines. Phosphorylated on tyrosine residues upon MHC-II aggregation. Dephosphorylation by PPP6C leads to inactivation and decreased production of IFN-beta. Phosphorylation at Ser-357 is also required to activate IRF3. Phosphorylation at Ser-354 by MAP3K7/TAK1 facilitates its interaction with STEEP1, promoting STING1 translocation to COPII vesicles. In terms of processing, ubiquitinated. Ubiquitinated via 'Lys-63'-linked ubiquitin chains in response to double-stranded DNA treatment, leading to relocalization to autophagosomes and subsequent degradation; this process is dependent on SQSTM1. 'Lys-63'-linked ubiquitination mediated by TRIM56 at Lys-150 promotes homodimerization and recruitment of the antiviral kinase TBK1 and subsequent production of IFN-beta. 'Lys-48'-linked polyubiquitination at Lys-150 occurring after viral infection is mediated by RNF5 and leads to proteasomal degradation. 'Lys-11'-linked polyubiquitination at Lys-150 by RNF26 leads to stabilize STING1: it protects STING1 from RNF5-mediated 'Lys-48'-linked polyubiquitination. 'Lys-33'-linked and 'Lys-48'-linked deubiquitinated by USP20; leading to its stabilization and promotion of innate antiviral response. 'Lys-48'-linked deubiquitinated by USP44; leading to its stabilization and promotion of innate antiviral response. 'Lys-63'-linked deubiquitinated by USP49; leading to inhibition of the subsequent recruitment of TBK1 to the signaling complex. 'Lys-63'-linked ubiquitination mediated by RNF39 promotes the activation of the cGAS-STING pathway. Post-translationally, palmitoylation takes place in the Golgi apparatus and creates a platform for the recruitment of TBK1.

Its subcellular location is the endoplasmic reticulum membrane. It is found in the cytoplasm. It localises to the perinuclear region. The protein localises to the endoplasmic reticulum-Golgi intermediate compartment membrane. The protein resides in the golgi apparatus membrane. Its subcellular location is the cytoplasmic vesicle. It is found in the autophagosome membrane. It localises to the mitochondrion outer membrane. The protein localises to the cell membrane. The enzyme catalyses H(+)(in) = H(+)(out). Its function is as follows. Facilitator of innate immune signaling that acts as a sensor of cytosolic DNA from bacteria and viruses and promotes the production of type I interferon (IFN-alpha and IFN-beta). Innate immune response is triggered in response to non-CpG double-stranded DNA from viruses and bacteria delivered to the cytoplasm. Acts by binding cyclic dinucleotides: recognizes and binds cyclic di-GMP (c-di-GMP), a second messenger produced by bacteria, cyclic UMP-AMP (2',3'-cUAMP), and cyclic GMP-AMP (cGAMP), a messenger produced by CGAS in response to DNA virus in the cytosol. Upon binding to c-di-GMP or cGAMP, STING oligomerizes, translocates from the endoplasmic reticulum and is phosphorylated by TBK1 on the pLxIS motif, leading to recruitment and subsequent activation of the transcription factor IRF3 to induce expression of type I interferon and exert a potent anti-viral state. Exhibits 2',3' phosphodiester linkage-specific ligand recognition: can bind both 2'-3' linked cGAMP (2'-3'-cGAMP) and 3'-3' linked cGAMP but is preferentially activated by 2'-3' linked cGAMP. The preference for 2'-3'-cGAMP, compared to other linkage isomers is probably due to the ligand itself, whichs adopts an organized free-ligand conformation that resembles the STING1-bound conformation and pays low energy costs in changing into the active conformation. In addition to promote the production of type I interferons, plays a direct role in autophagy. Following cGAMP-binding, STING1 buds from the endoplasmic reticulum into COPII vesicles, which then form the endoplasmic reticulum-Golgi intermediate compartment (ERGIC). The ERGIC serves as the membrane source for WIPI2 recruitment and LC3 lipidation, leading to formation of autophagosomes that target cytosolic DNA or DNA viruses for degradation by the lysosome. Promotes autophagy by acting as a proton channel that directs proton efflux from the Golgi to facilitate MAP1LC3B/LC3B lipidation. The autophagy- and interferon-inducing activities can be uncoupled and autophagy induction is independent of TBK1 phosphorylation. Autophagy is also triggered upon infection by bacteria: following c-di-GMP-binding, which is produced by live Gram-positive bacteria, promotes reticulophagy. May be involved in translocon function, the translocon possibly being able to influence the induction of type I interferons. May be involved in transduction of apoptotic signals via its association with the major histocompatibility complex class II (MHC-II). In Bos taurus (Bovine), this protein is Stimulator of interferon genes protein.